We begin with the raw amino-acid sequence, 409 residues long: N-acetylglucosamine-6-phosphate deacetylase (409 aa).

Glu-143 lines the a divalent metal cation pocket. Residue 154–155 (AH) coordinates substrate. The a divalent metal cation site is built by His-211 and His-232. Residues 235–236 (NA), Arg-243, and 269–272 (DGIH) contribute to the substrate site. The active-site Proton donor/acceptor is Asp-294. 328–330 (LGG) provides a ligand contact to substrate.

This sequence belongs to the metallo-dependent hydrolases superfamily. NagA family. Requires a divalent metal cation as cofactor.

The enzyme catalyses N-acetyl-D-glucosamine 6-phosphate + H2O = D-glucosamine 6-phosphate + acetate. Its pathway is amino-sugar metabolism; N-acetylneuraminate degradation. Its function is as follows. Hydrolyzes the N-glycolyl group from N-glycolylglucosamine 6-phosphate (GlcNGc-6-P) in the N-glycolylneuraminic acid (Neu5Gc) degradation pathway. This is N-acetylglucosamine-6-phosphate deacetylase (Amdhd2) from Mus musculus (Mouse).